A 174-amino-acid chain; its full sequence is RNA pyrophosphohydrolase (174 aa).

A Nudix hydrolase domain is found at 6-149 (GFRANVGIII…KRDVYRKVMK (144 aa)). The Nudix box motif lies at 38 to 59 (GGVDDGESAEEAMYRELYEEVG).

Belongs to the Nudix hydrolase family. RppH subfamily. A divalent metal cation is required as a cofactor.

Accelerates the degradation of transcripts by removing pyrophosphate from the 5'-end of triphosphorylated RNA, leading to a more labile monophosphorylated state that can stimulate subsequent ribonuclease cleavage. The chain is RNA pyrophosphohydrolase from Shewanella oneidensis (strain ATCC 700550 / JCM 31522 / CIP 106686 / LMG 19005 / NCIMB 14063 / MR-1).